The sequence spans 228 residues: L-ornithine N5-acetyltransferase NATA1 (228 aa).

The disordered stretch occupies residues 1–21 (MAPPTAAPEPNTVPETSPTGH). Residues 77-227 (VFLLEISPSP…DALQAIDKLN (151 aa)) enclose the N-acetyltransferase domain. Acetyl-CoA is bound by residues 153–155 (IFM), 161–166 (RKGFGK), 192–195 (NVNA), and tyrosine 199.

It belongs to the acetyltransferase family.

In terms of biological role, acetyltransferase that converts ornithine to N5-acetylornithine, which is likely used in plant defense. The polypeptide is L-ornithine N5-acetyltransferase NATA1 (NATA1) (Arabidopsis thaliana (Mouse-ear cress)).